A 132-amino-acid polypeptide reads, in one-letter code: Phosphoribosyl-AMP cyclohydrolase (132 aa).

Aspartate 86 contacts Mg(2+). Cysteine 87 contacts Zn(2+). The Mg(2+) site is built by aspartate 88 and aspartate 90. Residues cysteine 103 and cysteine 110 each coordinate Zn(2+).

The protein belongs to the PRA-CH family. In terms of assembly, homodimer. It depends on Mg(2+) as a cofactor. Requires Zn(2+) as cofactor.

Its subcellular location is the cytoplasm. The catalysed reaction is 1-(5-phospho-beta-D-ribosyl)-5'-AMP + H2O = 1-(5-phospho-beta-D-ribosyl)-5-[(5-phospho-beta-D-ribosylamino)methylideneamino]imidazole-4-carboxamide. It functions in the pathway amino-acid biosynthesis; L-histidine biosynthesis; L-histidine from 5-phospho-alpha-D-ribose 1-diphosphate: step 3/9. Catalyzes the hydrolysis of the adenine ring of phosphoribosyl-AMP. This chain is Phosphoribosyl-AMP cyclohydrolase, found in Clavibacter michiganensis subsp. michiganensis (strain NCPPB 382).